The primary structure comprises 250 residues: DNA polymerase sliding clamp (250 aa).

The protein belongs to the PCNA family. In terms of assembly, homotrimer. The subunits circularize to form a toroid; DNA passes through its center. Replication factor C (RFC) is required to load the toroid on the DNA.

Functionally, sliding clamp subunit that acts as a moving platform for DNA processing. Responsible for tethering the catalytic subunit of DNA polymerase and other proteins to DNA during high-speed replication. In Methanococcus maripaludis (strain C5 / ATCC BAA-1333), this protein is DNA polymerase sliding clamp.